Here is a 155-residue protein sequence, read N- to C-terminus: NADPH-dependent 7-cyano-7-deazaguanine reductase (155 aa).

C53 functions as the Thioimide intermediate in the catalytic mechanism. D60 serves as the catalytic Proton donor. Substrate contacts are provided by residues 75–77 (VES) and 94–95 (HE).

Belongs to the GTP cyclohydrolase I family. QueF type 1 subfamily.

The protein localises to the cytoplasm. The enzyme catalyses 7-aminomethyl-7-carbaguanine + 2 NADP(+) = 7-cyano-7-deazaguanine + 2 NADPH + 3 H(+). Its pathway is tRNA modification; tRNA-queuosine biosynthesis. Catalyzes the NADPH-dependent reduction of 7-cyano-7-deazaguanine (preQ0) to 7-aminomethyl-7-deazaguanine (preQ1). The protein is NADPH-dependent 7-cyano-7-deazaguanine reductase of Brucella anthropi (strain ATCC 49188 / DSM 6882 / CCUG 24695 / JCM 21032 / LMG 3331 / NBRC 15819 / NCTC 12168 / Alc 37) (Ochrobactrum anthropi).